Here is a 229-residue protein sequence, read N- to C-terminus: MNPLTRVALAVAAFAALVLALSACGPAHVAGHVPKRRDYAVPDAAGQEAQAASAGSTWREGRAASMLYTDARALRVNDLVVVRIEEIADAKRSADTDLTRRSELNASIEAFLTSLDAPYALKGGATTGFKGLGSTARTERLTATVPAVVRKVLPNGNLFIEGHRVVLVNAEEQHFYISGVVRPIDIDQENGVKSSMVADAEIEFTGRGVLSDNQRQGWLSRLLGWFWPF.

The signal sequence occupies residues Met-1–Ala-23. A lipid anchor (N-palmitoyl cysteine) is attached at Cys-24. Cys-24 carries S-diacylglycerol cysteine lipidation.

This sequence belongs to the FlgH family. As to quaternary structure, the basal body constitutes a major portion of the flagellar organelle and consists of four rings (L,P,S, and M) mounted on a central rod.

The protein localises to the cell outer membrane. Its subcellular location is the bacterial flagellum basal body. Assembles around the rod to form the L-ring and probably protects the motor/basal body from shearing forces during rotation. This chain is Flagellar L-ring protein, found in Anaeromyxobacter sp. (strain K).